The sequence spans 206 residues: Triosephosphate isomerase (206 aa).

Catalysis depends on His76, which acts as the Electrophile. The Proton acceptor role is filled by Glu146.

Belongs to the triosephosphate isomerase family. As to quaternary structure, homodimer.

It carries out the reaction D-glyceraldehyde 3-phosphate = dihydroxyacetone phosphate. The protein operates within carbohydrate biosynthesis; gluconeogenesis. It participates in carbohydrate degradation; glycolysis; D-glyceraldehyde 3-phosphate from glycerone phosphate: step 1/1. The sequence is that of Triosephosphate isomerase (Tpi) from Aedes togoi (Mosquito).